The following is a 483-amino-acid chain: Protein hedgehog (483 aa).

The first 19 residues, 1–19 (MDNQTVAAIWSCASATCLS), serve as a signal peptide directing secretion. Residues 20-92 (LDAKRHSVET…LALNFRHAHS (73 aa)) constitute a propeptide that is removed on maturation. A disordered region spans residues 28-57 (ETNTNDRQAPPGLSNSNNNNNNNKSTAVDA). Positions 41-50 (SNSNNNNNNN) are enriched in low complexity. Cys-93 carries the N-palmitoyl cysteine lipid modification. Ca(2+) contacts are provided by Glu-157, Glu-158, Asp-163, Thr-193, Glu-194, Asp-197, and Asp-199. Gly-266 carries the Cholesterol glycine ester lipid modification.

Belongs to the hedgehog family. In terms of assembly, interacts with shf. The C-terminal part of the hedgehog protein precursor displays an autoproteolysis activity that results in the cleavage of the full-length protein into two parts (N-product and C-product). In addition, the C-terminal part displays a cholesterol transferase activity that results by the covalent attachment of a cholesterol moiety to the C-terminal of the newly generated N-product. The N-product is the active species in both local and long-range signaling, whereas the C-product has no signaling activity. In terms of processing, cholesterylation is required for N-product targeting to lipid rafts and multimerization. Post-translationally, N-palmitoylation by Rasp of the hedgehog N-product, within the secretory pathway, is required for the embryonic and larval patterning activities of the hedgehog signal.

Its subcellular location is the nucleus. The protein resides in the cytoplasm. The protein localises to the cell membrane. It catalyses the reaction glycyl-L-cysteinyl-[protein] + cholesterol + H(+) = [protein]-C-terminal glycyl cholesterol ester + N-terminal L-cysteinyl-[protein]. Functionally, the C-terminal part of the hedgehog protein precursor displays an autoproteolysis activity that results in the cleavage of the full-length protein into two parts (N-product and C-product). In addition, the C-terminal part displays a cholesterol transferase activity that results by the covalent attachment of a cholesterol moiety to the C-terminal of the newly generated N-product. Once cleaved, the C-product has no signaling activity and diffuses from the cell. The dually lipidated hedgehog protein N-product is a morphogen which is essential for a variety of patterning events during development. Establishes the anterior-posterior axis of the embryonic segments and patterns the larval imaginal disks. Binds to the patched (ptc) receptor, which functions in association with smoothened (smo), to activate the transcription of target genes wingless (wg), decapentaplegic (dpp) and ptc. In the absence of hh, ptc represses the constitutive signaling activity of smo through fused (fu). Essential component of a signaling pathway which regulates the Duox-dependent gut immune response to bacterial uracil; required to activate Cad99C-dependent endosome formation, norpA-dependent Ca2+ mobilization and p38 MAPK, which are essential steps in the Duox-dependent production of reactive oxygen species (ROS) in response to intestinal bacterial infection. During photoreceptor differentiation, it up-regulates transcription of Ubr3, which in turn promotes the hh-signaling pathway by mediating the ubiquitination and degradation of cos. The chain is Protein hedgehog from Drosophila virilis (Fruit fly).